Reading from the N-terminus, the 325-residue chain is Holliday junction branch migration complex subunit RuvB (325 aa).

A large ATPase domain (RuvB-L) region spans residues 1–180 (MKNQLLDAKV…FGIHLKLNFY (180 aa)). Residues Leu-19, Arg-20, Gly-61, Lys-64, Thr-65, Thr-66, 127–129 (EDF), Arg-170, Tyr-180, and Arg-217 each bind ATP. Thr-65 serves as a coordination point for Mg(2+). Residues 181 to 251 (SCEELTKIVE…ITDYALNQLG (71 aa)) form a small ATPAse domain (RuvB-S) region. Residues 254–325 (KLGLDSSDHK…ITANALKHLH (72 aa)) form a head domain (RuvB-H) region. DNA is bound by residues Arg-290, Arg-309, and Arg-314.

This sequence belongs to the RuvB family. In terms of assembly, homohexamer. Forms an RuvA(8)-RuvB(12)-Holliday junction (HJ) complex. HJ DNA is sandwiched between 2 RuvA tetramers; dsDNA enters through RuvA and exits via RuvB. An RuvB hexamer assembles on each DNA strand where it exits the tetramer. Each RuvB hexamer is contacted by two RuvA subunits (via domain III) on 2 adjacent RuvB subunits; this complex drives branch migration. In the full resolvosome a probable DNA-RuvA(4)-RuvB(12)-RuvC(2) complex forms which resolves the HJ.

It localises to the cytoplasm. It catalyses the reaction ATP + H2O = ADP + phosphate + H(+). Functionally, the RuvA-RuvB-RuvC complex processes Holliday junction (HJ) DNA during genetic recombination and DNA repair, while the RuvA-RuvB complex plays an important role in the rescue of blocked DNA replication forks via replication fork reversal (RFR). RuvA specifically binds to HJ cruciform DNA, conferring on it an open structure. The RuvB hexamer acts as an ATP-dependent pump, pulling dsDNA into and through the RuvAB complex. RuvB forms 2 homohexamers on either side of HJ DNA bound by 1 or 2 RuvA tetramers; 4 subunits per hexamer contact DNA at a time. Coordinated motions by a converter formed by DNA-disengaged RuvB subunits stimulates ATP hydrolysis and nucleotide exchange. Immobilization of the converter enables RuvB to convert the ATP-contained energy into a lever motion, pulling 2 nucleotides of DNA out of the RuvA tetramer per ATP hydrolyzed, thus driving DNA branch migration. The RuvB motors rotate together with the DNA substrate, which together with the progressing nucleotide cycle form the mechanistic basis for DNA recombination by continuous HJ branch migration. Branch migration allows RuvC to scan DNA until it finds its consensus sequence, where it cleaves and resolves cruciform DNA. The protein is Holliday junction branch migration complex subunit RuvB of Orientia tsutsugamushi (strain Ikeda) (Rickettsia tsutsugamushi).